The sequence spans 78 residues: DNA gyrase inhibitor YacG (78 aa).

The Zn(2+) site is built by Cys-7, Cys-10, Cys-26, and Cys-30.

This sequence belongs to the DNA gyrase inhibitor YacG family. In terms of assembly, interacts with GyrB. Zn(2+) serves as cofactor.

Its function is as follows. Inhibits all the catalytic activities of DNA gyrase by preventing its interaction with DNA. Acts by binding directly to the C-terminal domain of GyrB, which probably disrupts DNA binding by the gyrase. This Colwellia psychrerythraea (strain 34H / ATCC BAA-681) (Vibrio psychroerythus) protein is DNA gyrase inhibitor YacG.